The primary structure comprises 230 residues: Broad-specificity phosphatase YOR283W (230 aa).

H24 acts as the Tele-phosphohistidine intermediate in catalysis. Residues 36–37 (QG) and 102–105 (ERYM) each bind substrate. Residue E102 is the Proton donor/acceptor of the active site.

This sequence belongs to the phosphoglycerate mutase family. BPG-dependent PGAM subfamily.

Its subcellular location is the cytoplasm. It is found in the nucleus. Functionally, metal-independent phosphatase active against a broad range of phosphorylated substrates including nucleoside tri- and diphosphates, phosphorylated organic acids, and amino acids. Shows no activity against phytic acid, phosphorylated carbohydrates, and nucleoside monophosphates. This is Broad-specificity phosphatase YOR283W from Saccharomyces cerevisiae (strain ATCC 204508 / S288c) (Baker's yeast).